Here is a 213-residue protein sequence, read N- to C-terminus: N-(5'-phosphoribosyl)anthranilate isomerase (213 aa).

The protein belongs to the TrpF family.

It catalyses the reaction N-(5-phospho-beta-D-ribosyl)anthranilate = 1-(2-carboxyphenylamino)-1-deoxy-D-ribulose 5-phosphate. Its pathway is amino-acid biosynthesis; L-tryptophan biosynthesis; L-tryptophan from chorismate: step 3/5. The chain is N-(5'-phosphoribosyl)anthranilate isomerase from Leptospira interrogans serogroup Icterohaemorrhagiae serovar copenhageni (strain Fiocruz L1-130).